The sequence spans 391 residues: FLUCTUATING-LIGHT-ACCLIMATION protein 1, chloroplastic (391 aa).

The transit peptide at 1-48 directs the protein to the chloroplast; it reads MASSSTFLELTPFQWNQPLPYTQRPHHRTVLLYSKPQRRSNSIRLQIS. Residues 87 to 107 form a helical membrane-spanning segment; that stretch reads AIAAVLLGLLLFYDPNSALAA. Over residues 116–138 the composition is skewed to low complexity; it reads SFSSRSRSSSSSSSQSYSVPRTS. Positions 116 to 140 are disordered; it reads SFSSRSRSSSSSSSQSYSVPRTSNP. A run of 2 helical transmembrane segments spans residues 168–188 and 321–341; these read FGFG…AFVL and YIVV…PING.

The protein belongs to the FLAP family.

The protein resides in the plastid. It is found in the chloroplast thylakoid membrane. The protein localises to the chloroplast membrane. It localises to the chloroplast envelope. Monitors proton H(+) homeostasis in chloroplasts to manipulate luminal acidification levels appropriately to balance photoprotection and photochemical processes. Required during acclimation response to fluctuating light (e.g. photosynthetic activity optimization) by controlling non-photochemical quenching (NPQ); acts independently from DLDG1. The protein is FLUCTUATING-LIGHT-ACCLIMATION protein 1, chloroplastic of Arabidopsis thaliana (Mouse-ear cress).